The following is a 359-amino-acid chain: Fructose-bisphosphate aldolase (359 aa).

Residue S62 participates in D-glyceraldehyde 3-phosphate binding. The active-site Proton donor is D109. H110, D144, E174, and H226 together coordinate Zn(2+). G227 contacts dihydroxyacetone phosphate. Position 265 (H265) interacts with Zn(2+). Dihydroxyacetone phosphate-binding positions include 266-268 (GGS) and 287-290 (NLDT).

Belongs to the class II fructose-bisphosphate aldolase family. As to quaternary structure, homodimer. It depends on Zn(2+) as a cofactor.

The protein localises to the cytoplasm. It carries out the reaction beta-D-fructose 1,6-bisphosphate = D-glyceraldehyde 3-phosphate + dihydroxyacetone phosphate. Its pathway is carbohydrate degradation; glycolysis; D-glyceraldehyde 3-phosphate and glycerone phosphate from D-glucose: step 4/4. Catalyzes the aldol condensation of dihydroxyacetone phosphate (DHAP or glycerone-phosphate) with glyceraldehyde 3-phosphate (G3P) to form fructose 1,6-bisphosphate (FBP) in gluconeogenesis and the reverse reaction in glycolysis. The protein is Fructose-bisphosphate aldolase (FBA1) of Candida albicans (strain SC5314 / ATCC MYA-2876) (Yeast).